Consider the following 406-residue polypeptide: S-adenosylmethionine synthase (406 aa).

His16 is a binding site for ATP. Asp18 is a Mg(2+) binding site. Residue Glu44 coordinates K(+). L-methionine contacts are provided by Glu57 and Gln100. The segment at 100–110 is flexible loop; sequence QSVDIAQGVDR. ATP-binding positions include 165–167, Asp241, 247–248, Ala264, and Lys268; these read DAK and RK. An L-methionine-binding site is contributed by Asp241. Lys272 provides a ligand contact to L-methionine.

It belongs to the AdoMet synthase family. As to quaternary structure, homotetramer; dimer of dimers. Mg(2+) is required as a cofactor. Requires K(+) as cofactor.

It localises to the cytoplasm. It carries out the reaction L-methionine + ATP + H2O = S-adenosyl-L-methionine + phosphate + diphosphate. The protein operates within amino-acid biosynthesis; S-adenosyl-L-methionine biosynthesis; S-adenosyl-L-methionine from L-methionine: step 1/1. In terms of biological role, catalyzes the formation of S-adenosylmethionine (AdoMet) from methionine and ATP. The overall synthetic reaction is composed of two sequential steps, AdoMet formation and the subsequent tripolyphosphate hydrolysis which occurs prior to release of AdoMet from the enzyme. The sequence is that of S-adenosylmethionine synthase from Chromohalobacter salexigens (strain ATCC BAA-138 / DSM 3043 / CIP 106854 / NCIMB 13768 / 1H11).